We begin with the raw amino-acid sequence, 1344 residues long: Xanthine dehydrogenase (1344 aa).

Residues 9–96 (SVLVFFVNGK…GCAVTTVEGI (88 aa)) form the 2Fe-2S ferredoxin-type domain. Residues Cys48, Cys53, Cys56, Cys78, Cys118, Cys121, Cys153, and Cys155 each contribute to the [2Fe-2S] cluster site. The region spanning 236-425 (FSSERVTWYR…LGIHFQKTTP (190 aa)) is the FAD-binding PCMH-type domain. FAD-binding positions include 264-271 (LVVGNTEV), Phe344, 354-358 (CLGGN), Asp367, Leu415, and Lys433. 2 residues coordinate Mo-molybdopterin: Gln781 and Phe812. Glu816 and Arg894 together coordinate substrate. Residue Arg926 coordinates Mo-molybdopterin. Phe928 lines the substrate pocket. Ala1093 contacts Mo-molybdopterin. The active-site Proton acceptor is the Glu1276.

This sequence belongs to the xanthine dehydrogenase family. Homodimer. FAD is required as a cofactor. Mo-molybdopterin serves as cofactor. Requires [2Fe-2S] cluster as cofactor.

It is found in the peroxisome. The catalysed reaction is xanthine + NAD(+) + H2O = urate + NADH + H(+). The enzyme catalyses hypoxanthine + NAD(+) + H2O = xanthine + NADH + H(+). Key enzyme in purine degradation. Catalyzes the oxidation of hypoxanthine to xanthine. Catalyzes the oxidation of xanthine to uric acid. This Drosophila subobscura (Fruit fly) protein is Xanthine dehydrogenase (Xdh).